Reading from the N-terminus, the 352-residue chain is C-C chemokine receptor type 5 (352 aa).

At 1–30 (MDYQVSSPTYDIDYYTSEPCQKINVKQIAA) the chain is on the extracellular side. Tyrosine 3 carries the sulfotyrosine modification. O-linked (GalNAc...) serine glycans are attached at residues serine 6 and serine 7. 3 positions are modified to sulfotyrosine: tyrosine 10, tyrosine 14, and tyrosine 15. Disulfide bonds link cysteine 20/cysteine 269 and cysteine 101/cysteine 178. A helical membrane pass occupies residues 31-58 (RLLPPLYSLVFIFGFVGNILVVLILINC). Topologically, residues 59–68 (KRLKSMTDIY) are cytoplasmic. A helical transmembrane segment spans residues 69–89 (LLNLAISDLLFLLTIPFWAHY). Topologically, residues 90-102 (AAAQWDFGNTMCQ) are extracellular. A helical transmembrane segment spans residues 103–124 (LLTGLYLIGFFSGIFFIILLTI). Residues 125–141 (DRYLAIVHAVFALKART) are Cytoplasmic-facing. Residues 142-166 (VTFGLVTSVITWVVAVFASLPGIIF) traverse the membrane as a helical segment. Residues 167-198 (TRSQREGLHYTCSSHFPSSQYQFWKNFQTLKI) lie on the Extracellular side of the membrane. Residues 199 to 218 (VILGLVLPLLVMVICYSGIL) form a helical membrane-spanning segment. Residues 219-235 (KTLLRCRNEKKRHRAVR) lie on the Cytoplasmic side of the membrane. A helical membrane pass occupies residues 236 to 260 (LIFTIMIVYFLFWAPYNIVLLLNTF). Residues 261–277 (QEFFGLNNCSSSNRLDQ) are Extracellular-facing. A helical transmembrane segment spans residues 278–301 (AMQVTETLGMTHCCINPIIYAFVG). At 302-352 (EKFRNYLLVFFQKHLAKRFCKCCSIFQQEAPERASSVYTRSTGEQETTVGL) the chain is on the cytoplasmic side. S-palmitoyl cysteine attachment occurs at residues cysteine 321, cysteine 323, and cysteine 324. 3 positions are modified to phosphoserine; by BARK1: serine 336, serine 337, and serine 342.

Belongs to the G-protein coupled receptor 1 family. Interacts with PRAF2. Efficient ligand binding to CCL3/MIP-1alpha and CCL4/MIP-1beta requires sulfation, O-glycosylation and sialic acid modifications. Glycosylation on Ser-6 is required for efficient binding of CCL4. Interacts with GRK2. Interacts with ARRB1 and ARRB2. Interacts with CNIH4. Interacts with S100A4; this interaction stimulates T-lymphocyte chemotaxis. Sulfated on at least 2 of the N-terminal tyrosines. Sulfation is required for efficient binding of the chemokines, CCL3 and CCL4. In terms of processing, palmitoylation in the C-terminal is important for cell surface expression. Post-translationally, phosphorylation on serine residues in the C-terminal is stimulated by binding CC chemokines especially by APO-RANTES. O-glycosylated, but not N-glycosylated. Ser-6 appears to be the major site even if Ser-7 may be also O-glycosylated. Also sialylated glycans present which contribute to chemokine binding. Thr-16 and Ser-17 may also be glycosylated and, if so, with small moieties such as a T-antigen.

Its subcellular location is the cell membrane. Functionally, receptor for a number of inflammatory CC-chemokines including CCL3/MIP-1-alpha, CCL4/MIP-1-beta and RANTES and subsequently transduces a signal by increasing the intracellular calcium ion level. May play a role in the control of granulocytic lineage proliferation or differentiation. Participates in T-lymphocyte migration to the infection site by acting as a chemotactic receptor. The chain is C-C chemokine receptor type 5 (CCR5) from Allochrocebus lhoesti (L'Hoest's monkey).